A 338-amino-acid chain; its full sequence is Auxin-responsive protein IAA9 (338 aa).

A disordered region spans residues 1–25; it reads MSPEEELQSNVSVASSSPTSNCISR. Positions 9–21 are enriched in low complexity; sequence SNVSVASSSPTSN. The EAR-like (transcriptional repression) motif lies at 68–72; that stretch reads LTLGL. The disordered stretch occupies residues 150 to 186; sequence ATQSVTKKDVPQNIPKGQSSTTNNSSSPPAAKAQIVG. Low complexity predominate over residues 168-180; it reads SSTTNNSSSPPAA. A PB1 domain is found at 216–318; that stretch reads ALFVKVSMDG…VCKKLKIMKG (103 aa).

This sequence belongs to the Aux/IAA family. As to quaternary structure, homodimers and heterodimers. Interacts with TPL. In terms of processing, phosphorylated by phytochrome A in vitro. As to expression, highly expressed in the whole plant.

It localises to the nucleus. Its function is as follows. Aux/IAA proteins are short-lived transcriptional factors that function as repressors of early auxin response genes at low auxin concentrations. Repression is thought to result from the interaction with auxin response factors (ARFs), proteins that bind to the auxin-responsive promoter element (AuxRE). Formation of heterodimers with ARF proteins may alter their ability to modulate early auxin response genes expression. The sequence is that of Auxin-responsive protein IAA9 (IAA9) from Arabidopsis thaliana (Mouse-ear cress).